An 809-amino-acid polypeptide reads, in one-letter code: Trimethylamine-N-oxide reductase 2 (809 aa).

The segment at residues 1 to 31 (MTLTRREFIKHSGIAAGTLVVTSAAPLPAWA) is a signal peptide (tat-type signal). Residue Ser176 participates in Mo-bis(molybdopterin guanine dinucleotide) binding.

It belongs to the prokaryotic molybdopterin-containing oxidoreductase family. Mo-bis(molybdopterin guanine dinucleotide) serves as cofactor. Post-translationally, predicted to be exported by the Tat system. The position of the signal peptide cleavage has not been experimentally proven.

The protein resides in the periplasm. The enzyme catalyses trimethylamine + 2 Fe(III)-[cytochrome c] + H2O = trimethylamine N-oxide + 2 Fe(II)-[cytochrome c] + 3 H(+). In terms of biological role, reduces trimethylamine-N-oxide (TMAO) into trimethylamine; an anaerobic reaction coupled to energy-yielding reactions. Can also reduce other N- and S-oxide compounds such as 4-methylmorpholine-N-oxide and biotin sulfoxide (BSO), but with a lower catalytic efficiency. This Escherichia coli O6:H1 (strain CFT073 / ATCC 700928 / UPEC) protein is Trimethylamine-N-oxide reductase 2 (torZ).